An 880-amino-acid chain; its full sequence is Alanine--tRNA ligase (880 aa).

4 residues coordinate Zn(2+): His-567, His-571, Cys-669, and His-673.

The protein belongs to the class-II aminoacyl-tRNA synthetase family. Zn(2+) serves as cofactor.

It is found in the cytoplasm. It carries out the reaction tRNA(Ala) + L-alanine + ATP = L-alanyl-tRNA(Ala) + AMP + diphosphate. In terms of biological role, catalyzes the attachment of alanine to tRNA(Ala) in a two-step reaction: alanine is first activated by ATP to form Ala-AMP and then transferred to the acceptor end of tRNA(Ala). Also edits incorrectly charged Ser-tRNA(Ala) and Gly-tRNA(Ala) via its editing domain. The chain is Alanine--tRNA ligase from Bacillus mycoides (strain KBAB4) (Bacillus weihenstephanensis).